Consider the following 402-residue polypeptide: NAD-dependent protein deacetylase sirtuin-7 (402 aa).

Positions 1-23 are disordered; it reads MAAGGGLSRSERKAAERVRRLRE. Residues 9 to 23 are compositionally biased toward basic and acidic residues; sequence RSERKAAERVRRLRE. One can recognise a Deacetylase sirtuin-type domain in the interval 83–330; that stretch reads PEELRRKVRE…QLLMNELGLE (248 aa). NAD(+) is bound by residues 108 to 127 and 168 to 171; these read GAGI…NGVW and QNCD. H188 (proton acceptor) is an active-site residue. Zn(2+)-binding residues include C196, C199, C226, and C229. NAD(+) is bound by residues 269–271, 298–300, and C316; these read GSS and NLQ. Positions 355–402 are disordered; the sequence is SHSRKSLCRSREEAPPGDQSDPLASAPPILGGWFGRGCAKRAKRKKVA. R390 carries the asymmetric dimethylarginine; alternate modification. R390 is modified (omega-N-methylarginine; alternate). Over residues 392–402 the composition is skewed to basic residues; it reads CAKRAKRKKVA.

It belongs to the sirtuin family. Class IV subfamily. Interacts with UBTF and the RNA polymerase I complex. Interacts with components of the B-WICH complex, such as MYBBP1A, SMARCA5/SNF2H and BAZ1B/WSTF. Interacts with ELK4, leading to stabilization at target promoters for H3K18Ac deacetylation. Interacts with histone H2A and/or histone H2B. Interacts with DNMT1. Interacts with SIRT1. Zn(2+) is required as a cofactor. In terms of processing, phosphorylated during mitosis. Post-translationally, methylation at Arg-390 by PRMT6 inhibits the H3K18Ac histone deacetylase activity, promoting mitochondria biogenesis and maintaining mitochondria respiration. Ubiquitinated via 'Lys-63'-linked ubiquitin chains. Deubiquitinated by USP7, inhibiting the H3K18Ac histone deacetylase activity and regulating gluconeogenesis. Ubiquitinated by E3 ubiquitin-protein ligase complex containing FBXO7; leading to proteasomal degradation. As to expression, detected in liver, spleen and testis. Detected in embryos.

The protein localises to the nucleus. It localises to the nucleolus. Its subcellular location is the nucleoplasm. The protein resides in the chromosome. It is found in the cytoplasm. The catalysed reaction is N(6)-acetyl-L-lysyl-[protein] + NAD(+) + H2O = 2''-O-acetyl-ADP-D-ribose + nicotinamide + L-lysyl-[protein]. The enzyme catalyses N(6)-glutaryl-L-lysyl-[protein] + NAD(+) + H2O = 2''-O-glutaryl-ADP-D-ribose + nicotinamide + L-lysyl-[protein]. It carries out the reaction N(6)-succinyl-L-lysyl-[protein] + NAD(+) + H2O = 2''-O-succinyl-ADP-D-ribose + nicotinamide + L-lysyl-[protein]. It catalyses the reaction N(6)-propanoyl-L-lysyl-[protein] + NAD(+) + H2O = 3''-O-propanoyl-ADP-D-ribose + nicotinamide + L-lysyl-[protein]. The catalysed reaction is N(6)-decanoyl-L-lysyl-[protein] + NAD(+) + H2O = 2''-O-decanoyl-ADP-D-ribose + nicotinamide + L-lysyl-[protein]. With respect to regulation, NAD-dependent protein-lysine deacetylase and deacylase activities are activated by nucleic acids. Histone deacetylase activity is activated by DNA. Protein-lysine deacylase activity is activated by RNA. H3K18Ac histone deacetylase activity is inhibited by methylation at Arg-390. H3K18Ac histone deacetylase activity is inhibited by deubiquitination by USP7. NAD-dependent protein-lysine deacylase that can act both as a deacetylase or deacylase (desuccinylase, depropionylase and deglutarylase), depending on the context. Also acts as a dedecanoylase. Specifically mediates deacetylation of histone H3 at 'Lys-18' (H3K18Ac). In contrast to other histone deacetylases, displays strong preference for a specific histone mark, H3K18Ac, directly linked to control of gene expression. H3K18Ac is mainly present around the transcription start site of genes and has been linked to activation of nuclear hormone receptors; SIRT7 thereby acts as a transcription repressor. Moreover, H3K18 hypoacetylation has been reported as a marker of malignancy in various cancers and seems to maintain the transformed phenotype of cancer cells. Also able to mediate deacetylation of histone H3 at 'Lys-36' (H3K36Ac) in the context of nucleosomes. Also mediates deacetylation of non-histone proteins, such as ATM, CDK9, DDX21, DDB1, FBL, FKBP5/FKBP51, GABPB1, RAN, RRP9/U3-55K and POLR1E/PAF53. Enriched in nucleolus where it stimulates transcription activity of the RNA polymerase I complex. Acts by mediating the deacetylation of the RNA polymerase I subunit POLR1E/PAF53, thereby promoting the association of RNA polymerase I with the rDNA promoter region and coding region. In response to metabolic stress, SIRT7 is released from nucleoli leading to hyperacetylation of POLR1E/PAF53 and decreased RNA polymerase I transcription. Required to restore the transcription of ribosomal RNA (rRNA) at the exit from mitosis. Promotes pre-ribosomal RNA (pre-rRNA) cleavage at the 5'-terminal processing site by mediating deacetylation of RRP9/U3-55K, a core subunit of the U3 snoRNP complex. Mediates 'Lys-37' deacetylation of Ran, thereby regulating the nuclear export of NF-kappa-B subunit RELA/p65. Acts as a regulator of DNA damage repair by mediating deacetylation of ATM during the late stages of DNA damage response, promoting ATM dephosphorylation and deactivation. May also deacetylate p53/TP53 and promotes cell survival, however such data need additional confirmation. Suppresses the activity of the DCX (DDB1-CUL4-X-box) E3 ubiquitin-protein ligase complexes by mediating deacetylation of DDB1, which prevents the interaction between DDB1 and CUL4 (CUL4A or CUL4B). Activates RNA polymerase II transcription by mediating deacetylation of CDK9, thereby promoting 'Ser-2' phosphorylation of the C-terminal domain (CTD) of RNA polymerase II. Deacetylates FBL, promoting histone-glutamine methyltransferase activity of FBL. Acts as a regulator of mitochondrial function by catalyzing deacetylation of GABPB1. Regulates Akt/AKT1 activity by mediating deacetylation of FKBP5/FKBP51. Required to prevent R-loop-associated DNA damage and transcription-associated genomic instability by mediating deacetylation and subsequent activation of DDX21, thereby overcoming R-loop-mediated stalling of RNA polymerases. In addition to protein deacetylase activity, also acts as protein-lysine deacylase. Acts as a protein depropionylase by mediating depropionylation of Osterix (SP7), thereby regulating bone formation by osteoblasts. Acts as a histone deglutarylase by mediating deglutarylation of histone H4 on 'Lys-91' (H4K91glu); a mark that destabilizes nucleosomes by promoting dissociation of the H2A-H2B dimers from nucleosomes. Acts as a histone desuccinylase: in response to DNA damage, recruited to DNA double-strand breaks (DSBs) and catalyzes desuccinylation of histone H3 on 'Lys-122' (H3K122succ), thereby promoting chromatin condensation and DSB repair. Also promotes DSB repair by promoting H3K18Ac deacetylation, regulating non-homologous end joining (NHEJ). Along with its role in DNA repair, required for chromosome synapsis during prophase I of female meiosis by catalyzing H3K18Ac deacetylation. Involved in transcriptional repression of LINE-1 retrotransposon via H3K18Ac deacetylation, and promotes their association with the nuclear lamina. Required to stabilize ribosomal DNA (rDNA) heterochromatin and prevent cellular senescence induced by rDNA instability. Acts as a negative regulator of SIRT1 by preventing autodeacetylation of SIRT1, restricting SIRT1 deacetylase activity. The sequence is that of NAD-dependent protein deacetylase sirtuin-7 from Mus musculus (Mouse).